The primary structure comprises 274 residues: Large ribosomal subunit protein uL2 (274 aa).

Disordered stretches follow at residues 34–54 (LEKKSKSGGRNNNGRITTRHI) and 224–261 (VAMNPVDHPHGGGEGRTSGGRHPVSPWGFPTKGAKTRA).

This sequence belongs to the universal ribosomal protein uL2 family. As to quaternary structure, part of the 50S ribosomal subunit. Forms a bridge to the 30S subunit in the 70S ribosome.

Its function is as follows. One of the primary rRNA binding proteins. Required for association of the 30S and 50S subunits to form the 70S ribosome, for tRNA binding and peptide bond formation. It has been suggested to have peptidyltransferase activity; this is somewhat controversial. Makes several contacts with the 16S rRNA in the 70S ribosome. The chain is Large ribosomal subunit protein uL2 from Ectopseudomonas mendocina (strain ymp) (Pseudomonas mendocina).